The following is a 297-amino-acid chain: MLATEARQILSRVGSLVARNQMRAISNGTAQLEQQAQPKEAQEPQIKKFEIYRWNPDNAGEKPYMQTYEVDLRECGPMVLDALIKIKNEMDPTLTFRRSCREGICGSCAMNIGGTNTLACISKIDINTSKSLKVYPLPHMYVVRDLVPDMNNFYEQYRNIQPWLQRKNEAGEKKGKAQYLQSVEDRSKLDGLYECILCACCSTSCPSYWWNAEKYLGPAVLMQAYRWIIDSRDENSAERLNKLKDPFSVYRCHTIMNCTRTCPKGLNPGRAIAEIKKLLSGLASKPAPKLETAALHK.

The 94-residue stretch at 47–140 folds into the 2Fe-2S ferredoxin-type domain; it reads KKFEIYRWNP…SLKVYPLPHM (94 aa). [2Fe-2S] cluster-binding residues include Cys-100, Cys-105, Cys-108, and Cys-120. Residues 185 to 215 form the 4Fe-4S ferredoxin-type domain; the sequence is DRSKLDGLYECILCACCSTSCPSYWWNAEKY. Residues Cys-195, Cys-198, and Cys-201 each contribute to the [4Fe-4S] cluster site. Cys-205 is a [3Fe-4S] cluster binding site. Trp-210 contributes to the a ubiquinone binding site. Residues Cys-252 and Cys-258 each coordinate [3Fe-4S] cluster. Cys-262 serves as a coordination point for [4Fe-4S] cluster.

Belongs to the succinate dehydrogenase/fumarate reductase iron-sulfur protein family. In terms of assembly, component of complex II composed of four subunits: a flavoprotein (FP), an iron-sulfur protein (IP), and a cytochrome b composed of a large and a small subunit. Requires [2Fe-2S] cluster as cofactor. [3Fe-4S] cluster serves as cofactor. It depends on [4Fe-4S] cluster as a cofactor. As to expression, most abundant in the adult thorax and low in abdominal tissues.

It is found in the mitochondrion inner membrane. The enzyme catalyses a quinone + succinate = fumarate + a quinol. The protein operates within carbohydrate metabolism; tricarboxylic acid cycle; fumarate from succinate (eukaryal route): step 1/1. Functionally, iron-sulfur protein (IP) subunit of succinate dehydrogenase (SDH) that is involved in complex II of the mitochondrial electron transport chain and is responsible for transferring electrons from succinate to ubiquinone (coenzyme Q). This chain is Succinate dehydrogenase [ubiquinone] iron-sulfur subunit, mitochondrial (SdhB), found in Drosophila melanogaster (Fruit fly).